The sequence spans 359 residues: 3-dehydroquinate synthase (359 aa).

Residues 70–75 (DGEQYK), 105–109 (GVIGD), 129–130 (TT), K142, K151, and 169–172 (FYKT) contribute to the NAD(+) site. Residues E184, H247, and H264 each contribute to the Zn(2+) site.

It belongs to the sugar phosphate cyclases superfamily. Dehydroquinate synthase family. The cofactor is Co(2+). Zn(2+) serves as cofactor. Requires NAD(+) as cofactor.

Its subcellular location is the cytoplasm. The catalysed reaction is 7-phospho-2-dehydro-3-deoxy-D-arabino-heptonate = 3-dehydroquinate + phosphate. It participates in metabolic intermediate biosynthesis; chorismate biosynthesis; chorismate from D-erythrose 4-phosphate and phosphoenolpyruvate: step 2/7. Catalyzes the conversion of 3-deoxy-D-arabino-heptulosonate 7-phosphate (DAHP) to dehydroquinate (DHQ). This chain is 3-dehydroquinate synthase, found in Francisella tularensis subsp. holarctica (strain OSU18).